A 922-amino-acid polypeptide reads, in one-letter code: ATP-dependent helicase fft3 (922 aa).

Disordered stretches follow at residues 139–177 (EPKMPSYMDDEEASDSLPLSLSSQSLSSQVTNQKPAPHR) and 198–224 (PLSSRKTYEPEADDDSNDDMYSDDDSN). The span at 153–166 (DSLPLSLSSQSLSS) shows a compositional bias: low complexity. Over residues 207–223 (PEADDDSNDDMYSDDDS) the composition is skewed to acidic residues. Phosphoserine is present on residues Ser213 and Ser219. In terms of domain architecture, Helicase ATP-binding spans 399-567 (YLLYELKLAG…ISLLAFILPH (169 aa)). 412-419 (DEMGLGKT) serves as a coordination point for ATP. Positions 518 to 521 (DEGH) match the DEGH box motif. Phosphoserine is present on Ser617. One can recognise a Helicase C-terminal domain in the interval 765–922 (KLKKLLTNAV…ETVEAEDDDD (158 aa)).

This sequence belongs to the SNF2/RAD54 helicase family. As to quaternary structure, interacts with the GDP-bound form of spi1.

Its subcellular location is the nucleus. It is found in the chromosome. The catalysed reaction is ATP + H2O = ADP + phosphate + H(+). Its function is as follows. DNA helicase that possesses intrinsic ATP-dependent nucleosome-remodeling activity and is required for heterochromatin organization. Required for maintaining a heterochromatin chromatin structure at centromeres and subtelomeres by protecting these regions from euchromatin assembly. Enhances the nucleotide exchange activity of the pim1 guanine nucleotide exchange factor and abolishes histone-H3-mediated RanGAP inhibition. Involved in the construction of the centromeres. This Schizosaccharomyces pombe (strain 972 / ATCC 24843) (Fission yeast) protein is ATP-dependent helicase fft3 (fft3).